Consider the following 223-residue polypeptide: CKLF-like MARVEL transmembrane domain-containing protein 5 (223 aa).

The region spanning Phe-29–Met-213 is the MARVEL domain. The next 4 helical transmembrane spans lie at Gly-35–Ser-55, Ile-56–Leu-76, Phe-162–Ser-182, and Ala-186–Phe-206.

Belongs to the chemokine-like factor family. In terms of tissue distribution, highly expressed in the brain.

The protein localises to the membrane. This Homo sapiens (Human) protein is CKLF-like MARVEL transmembrane domain-containing protein 5 (CMTM5).